The primary structure comprises 364 residues: Probable G-protein coupled receptor AH9.4 (364 aa).

A topological domain (extracellular) is located at residue M1. A helical transmembrane segment spans residues 2–22 (AFLQSAYLVMVFTVPIAGVIL). The Cytoplasmic portion of the chain corresponds to 23–48 (NTYVLRKLIRVARKSVVRFETTSGLP). Residues 49 to 69 (LAAMSVGDSITLCALLMQAIF) form a helical membrane-spanning segment. The Extracellular segment spans residues 70–89 (HITPKGEVPTVVLSSICKFG). A helical transmembrane segment spans residues 90-110 (IFLIHSTSAFSVWCWFFLSVL). Over 111-130 (RYIAVFHPFKYRTIWRQPRN) the chain is Cytoplasmic. A helical transmembrane segment spans residues 131-151 (ALKFLAGAVGMFQIYTLIFVT). The Extracellular segment spans residues 152–177 (YRQEEKSCGEYDVFHESAFKHVHLLD). A helical membrane pass occupies residues 178 to 198 (IFLFYAIPSLLRITLDFLVLI). Residues 199–277 (HCYSPFSVEG…KKKTAMVMRS (79 aa)) lie on the Cytoplasmic side of the membrane. Residues 278–298 (ILISVLNLLLNLPSHIFRAWA) traverse the membrane as a helical segment. The Extracellular portion of the chain corresponds to 299–315 (SYDESSLENEIVRTLEP). The helical transmembrane segment at 316 to 336 (IAQMMYFSQFACNAFYLATSI) threads the bilayer. Topologically, residues 337–364 (YETNGSPRNTVISSSNRHVSRCISDDEA) are cytoplasmic.

It belongs to the G-protein coupled receptor 1 family.

It is found in the cell membrane. Functionally, not known. Putative receptor. The polypeptide is Probable G-protein coupled receptor AH9.4 (Caenorhabditis elegans).